Consider the following 436-residue polypeptide: Chaperone SurA (436 aa).

The first 30 residues, 1–30, serve as a signal peptide directing secretion; sequence MKFFQRPERRLKQWGLALLLAASALLPARA. PpiC domains are found at residues 180–281 and 291–389; these read ETEY…KLVD and VTQT…QVLE.

It is found in the periplasm. The enzyme catalyses [protein]-peptidylproline (omega=180) = [protein]-peptidylproline (omega=0). In terms of biological role, chaperone involved in the correct folding and assembly of outer membrane proteins. Recognizes specific patterns of aromatic residues and the orientation of their side chains, which are found more frequently in integral outer membrane proteins. May act in both early periplasmic and late outer membrane-associated steps of protein maturation. The polypeptide is Chaperone SurA (Thiobacillus denitrificans (strain ATCC 25259 / T1)).